The primary structure comprises 402 residues: Alkaline proteinase (402 aa).

Positions 1-20 are cleaved as a signal peptide; sequence MVTLRRLAVLLGAIPAALAA. Residues 21 to 120 constitute a propeptide that is removed on maturation; sequence PTTQKREVVP…EQDEGEFSTA (100 aa). The region spanning 32–108 is the Inhibitor I9 domain; that stretch reads KYIVTLKEGA…EVEEDQIWHL (77 aa). The Peptidase S8 domain maps to 128 to 402; it reads AWGLGTISHR…NRILYNGNGA (275 aa). Catalysis depends on charge relay system residues aspartate 160, histidine 191, and serine 347. The segment covering 382 to 392 has biased composition (polar residues); that stretch reads GRVSNPGSGSP. Residues 382 to 402 form a disordered region; that stretch reads GRVSNPGSGSPNRILYNGNGA.

Belongs to the peptidase S8 family.

The sequence is that of Alkaline proteinase (ALP) from Hapsidospora chrysogena (Acremonium chrysogenum).